Here is a 197-residue protein sequence, read N- to C-terminus: MSLGRLCRLLKPALLCGALAAPGLAGTMCASRDDWRCARSMHEFSAKDIDGHMVNLDKYRGFVCIVTNVASQUGKTEVNYTQLVDLHARYAECGLRILAFPCNQFGKQEPGSNEEIKEFAAGYNVKFDMFSKICVNGDDAHPLWKWMKIQPKGKGILGNAIKWNFTKFLIDKNGCVVKRYGPMEEPLVIEKDLPHYF.

S40 is subject to Phosphoserine. Residue U73 is part of the active site. Position 73 (U73) is a non-standard amino acid, selenocysteine.

The protein belongs to the glutathione peroxidase family. Monomer. Has a tendency to form higher mass oligomers. Interacts with FUNDC1; this interaction promotes GPX4 recruitment into mitochondria through TOM/TIM complex where it is degraded by mitophagy.

The protein localises to the mitochondrion. It is found in the cytoplasm. The enzyme catalyses a hydroperoxy polyunsaturated fatty acid + 2 glutathione = a hydroxy polyunsaturated fatty acid + glutathione disulfide + H2O. It catalyses the reaction 2 glutathione + H2O2 = glutathione disulfide + 2 H2O. The catalysed reaction is tert-butyl hydroperoxide + 2 glutathione = tert-butanol + glutathione disulfide + H2O. It carries out the reaction cumene hydroperoxide + 2 glutathione = 2-phenylpropan-2-ol + glutathione disulfide + H2O. The enzyme catalyses (9S)-hydroperoxy-(10E,12Z)-octadecadienoate + 2 glutathione = (9S)-hydroxy-(10E,12Z)-octadecadienoate + glutathione disulfide + H2O. It catalyses the reaction (13S)-hydroperoxy-(9Z,11E)-octadecadienoate + 2 glutathione = (13S)-hydroxy-(9Z,11E)-octadecadienoate + glutathione disulfide + H2O. The catalysed reaction is (5S)-hydroperoxy-(6E,8Z,11Z,14Z)-eicosatetraenoate + 2 glutathione = (5S)-hydroxy-(6E,8Z,11Z,14Z)-eicosatetraenoate + glutathione disulfide + H2O. It carries out the reaction (12R)-hydroperoxy-(5Z,8Z,10E,14Z)-eicosatetraenoate + 2 glutathione = (12R)-hydroxy-(5Z,8Z,10E,14Z)-eicosatetraenoate + glutathione disulfide + H2O. The enzyme catalyses (12S)-hydroperoxy-(5Z,8Z,10E,14Z)-eicosatetraenoate + 2 glutathione = (12S)-hydroxy-(5Z,8Z,10E,14Z)-eicosatetraenoate + glutathione disulfide + H2O. It catalyses the reaction (15S)-hydroperoxy-(5Z,8Z,11Z,13E)-eicosatetraenoate + 2 glutathione = (15S)-hydroxy-(5Z,8Z,11Z,13E)-eicosatetraenoate + glutathione disulfide + H2O. The catalysed reaction is (5S)-hydroperoxy-(6E,8Z,11Z,14Z,17Z)-eicosapentaenoate + 2 glutathione = (5S)-hydroxy-(6E,8Z,11Z,14Z,17Z)-eicosapentaenoate + glutathione disulfide + H2O. It carries out the reaction (12S)-hydroperoxy-(5Z,8Z,10E,14Z,17Z)-eicosapentaenoate + 2 glutathione = (12S)-hydroxy-(5Z,8Z,10E,14Z,17Z)-eicosapentaenoate + glutathione disulfide + H2O. The enzyme catalyses (15S)-hydroperoxy-(5Z,8Z,11Z,13E,17Z)-eicosapentaenoate + 2 glutathione = (15S)-hydroxy-(5Z,8Z,11Z,13E,17Z)-eicosapentaenoate + glutathione disulfide + H2O. It catalyses the reaction (15S)-hydroperoxy-(11Z,13E)-eicosadienoate + 2 glutathione = (15S)-hydroxy-(11Z,13E)-eicosadienoate + glutathione disulfide + H2O. The catalysed reaction is (17S)-hydroperoxy-(4Z,7Z,10Z,13Z,15E,19Z)-docosahexaenoate + 2 glutathione = (17S)-hydroxy-(4Z,7Z,10Z,13Z,15E,19Z)-docosahexaenoate + glutathione disulfide + H2O. It carries out the reaction a hydroperoxy-1,2-diacyl-glycero-3-phosphocholine + 2 glutathione = a hydroxy-1,2-diacyl-glycero-3-phosphocholine + glutathione disulfide + H2O. Functionally, essential antioxidant peroxidase that directly reduces phospholipid hydroperoxide even if they are incorporated in membranes and lipoproteins. Can also reduce fatty acid hydroperoxide, cholesterol hydroperoxide and thymine hydroperoxide. Plays a key role in protecting cells from oxidative damage by preventing membrane lipid peroxidation. Required to prevent cells from ferroptosis, a non-apoptotic cell death resulting from an iron-dependent accumulation of lipid reactive oxygen species. The presence of selenocysteine (Sec) versus Cys at the active site is essential for life: it provides resistance to overoxidation and prevents cells against ferroptosis. The presence of Sec at the active site is also essential for the survival of a specific type of parvalbumin-positive interneurons, thereby preventing against fatal epileptic seizures. May be required to protect cells from the toxicity of ingested lipid hydroperoxides. Required for normal sperm development and male fertility. Essential for maturation and survival of photoreceptor cells. Plays a role in a primary T-cell response to viral and parasitic infection by protecting T-cells from ferroptosis and by supporting T-cell expansion. Plays a role of glutathione peroxidase in platelets in the arachidonic acid metabolism. Reduces hydroperoxy ester lipids formed by a 15-lipoxygenase that may play a role as down-regulator of the cellular 15-lipoxygenase pathway. Can also reduce small soluble hydroperoxides such as H2O2, cumene hydroperoxide and tert-butyl hydroperoxide. This Pongo pygmaeus (Bornean orangutan) protein is Phospholipid hydroperoxide glutathione peroxidase.